The sequence spans 743 residues: Apo-petrobactin exporter (743 aa).

The next 12 membrane-spanning stretches (helical) occupy residues 20 to 40 (WITLSVWILITLLLSFTLPQV), 199 to 219 (ADVKLLVATVLLVLVLLILLY), 223 to 243 (ILAILPLLVVGFAYGIISPTL), 258 to 278 (AISIMTVLLFGAGTDYCLFLI), 303 to 323 (GGAIIMSALTVVLGLGTLLLA), 337 to 357 (VAVFIMGIAALTILPAFLLIF), 406 to 426 (WTIIMLTVFVLGGLASFVPRI), 561 to 581 (DEAVIIPVMISIIALLLLVYL), 584 to 604 (IVAMIYLIVTVVLSFFSALGA), 613 to 633 (MGAPAIQGAIPLYAFVFLVAL), 672 to 692 (AGLILAGTFAVLGTLPIQVLV), and 694 to 714 (FGIVTAIGVLLDTFIVRPLLV).

The protein belongs to the resistance-nodulation-cell division (RND) (TC 2.A.6) family. MmpL subfamily.

It is found in the cell membrane. Exports the siderophore petrobactin. The protein is Apo-petrobactin exporter of Bacillus anthracis.